We begin with the raw amino-acid sequence, 745 residues long: GTPase-activating protein GYP7 (745 aa).

The Rab-GAP TBC domain maps to 391–623 (LADDATRKEV…NIWEVFFTDF (233 aa)).

In terms of biological role, most effectively accelerate the intrinsic GTPase activity of YPT7. It is also active, but to a lesser extent, on YPT31, YPT32 and YPT1. YPT6 and SEC4. This Candida glabrata (strain ATCC 2001 / BCRC 20586 / JCM 3761 / NBRC 0622 / NRRL Y-65 / CBS 138) (Yeast) protein is GTPase-activating protein GYP7 (GYP7).